The sequence spans 280 residues: DAGVSWKVYRNKTLGPISSVLTYGSLVTSFKQSADPRSDLVRFGVAPSYPASFAADVLANRLPRVSWVIPNVLESEHPAVPAAAGAFAIVNILRILLANPAVWEKTALIVSYDENGGFFDHVVPATAPAGTPGEYVTVPDIDQVPGSGGIRGPIGLGFRVPCFVISPYSRGPQMVHDTFDHTSQLRLLETRFGVPVPNLTAWRRSVTGDMTSTFNFAVPPNSSWPNLDYPGLHALSTVPQCVPNAALGTINRGIPYRVPDPQIMPTQETTPTRGIPSGPC.

The tract at residues 258 to 280 (VPDPQIMPTQETTPTRGIPSGPC) is disordered.

This sequence belongs to the bacterial phospholipase C family.

It localises to the secreted. It is found in the cell wall. The enzyme catalyses a 1,2-diacyl-sn-glycero-3-phosphocholine + H2O = phosphocholine + a 1,2-diacyl-sn-glycerol + H(+). It catalyses the reaction 1,2-dihexadecanoyl-sn-glycero-3-phosphocholine + H2O = 1,2-dihexadecanoyl-sn-glycerol + phosphocholine + H(+). In terms of biological role, involved in virulence. Induces cytotoxic effects on mouse macrophage cell lines, via direct or indirect enzymatic hydrolysis of cell membrane phospholipids. Hydrolyzes phosphatidylcholine. Does not have hemolytic activity. This is Phospholipase C D from Mycobacterium tuberculosis (strain ATCC 25618 / H37Rv).